The chain runs to 105 residues: Large ribosomal subunit protein uL24 (105 aa).

This sequence belongs to the universal ribosomal protein uL24 family. Part of the 50S ribosomal subunit.

Functionally, one of two assembly initiator proteins, it binds directly to the 5'-end of the 23S rRNA, where it nucleates assembly of the 50S subunit. Its function is as follows. One of the proteins that surrounds the polypeptide exit tunnel on the outside of the subunit. This chain is Large ribosomal subunit protein uL24, found in Leptothrix cholodnii (strain ATCC 51168 / LMG 8142 / SP-6) (Leptothrix discophora (strain SP-6)).